The primary structure comprises 235 residues: MKSLFLSEKIYVLILAGGTGTRMGSEIPKQFLEFSNEPILIHTLKKFQSWKKQKQIVLVSHPEFISETESICSPFLENQDCIIEGGETRHGSMLRGLSALTIQSEDILLIHDAARPFVLLKELDLLCENIRENGISTLASRTSETVLEESNGKTSSFLDREHIWFMKTPQGIRGDILKELLTLPMDPIPTDLCSWALTAGKKSSIVESHPFNLKITRKEDLELAEFYSDLFEKLR.

Belongs to the IspD/TarI cytidylyltransferase family. IspD subfamily.

The catalysed reaction is 2-C-methyl-D-erythritol 4-phosphate + CTP + H(+) = 4-CDP-2-C-methyl-D-erythritol + diphosphate. It participates in isoprenoid biosynthesis; isopentenyl diphosphate biosynthesis via DXP pathway; isopentenyl diphosphate from 1-deoxy-D-xylulose 5-phosphate: step 2/6. In terms of biological role, catalyzes the formation of 4-diphosphocytidyl-2-C-methyl-D-erythritol from CTP and 2-C-methyl-D-erythritol 4-phosphate (MEP). The protein is 2-C-methyl-D-erythritol 4-phosphate cytidylyltransferase of Leptospira borgpetersenii serovar Hardjo-bovis (strain L550).